Here is a 435-residue protein sequence, read N- to C-terminus: uncharacterized protein (435 aa).

3 WD repeats span residues 105 to 149, 164 to 204, and 207 to 247; these read DLEY…GIDS, HNNA…SKTQ, and AHDK…HSTI. At Ser266 the chain carries Phosphoserine. Residues 313-353 form a WD 4 repeat; sequence GHKGDVNAVKWMPGSKSKLATCGDDCVVSLWDLDQPVNPSP. A disordered region spans residues 352 to 371; sequence SPAPTLSVSGTTPGMTGSTS. Over residues 358-371 the composition is skewed to low complexity; that stretch reads SVSGTTPGMTGSTS. Residue Ser388 is modified to Phosphoserine.

The protein resides in the cytoplasm. It localises to the golgi apparatus. This is an uncharacterized protein from Schizosaccharomyces pombe (strain 972 / ATCC 24843) (Fission yeast).